We begin with the raw amino-acid sequence, 173 residues long: Crossover junction endodeoxyribonuclease RuvC (173 aa).

Residues Asp8, Glu67, and Asp139 contribute to the active site. The Mg(2+) site is built by Asp8, Glu67, and Asp139.

This sequence belongs to the RuvC family. In terms of assembly, homodimer which binds Holliday junction (HJ) DNA. The HJ becomes 2-fold symmetrical on binding to RuvC with unstacked arms; it has a different conformation from HJ DNA in complex with RuvA. In the full resolvosome a probable DNA-RuvA(4)-RuvB(12)-RuvC(2) complex forms which resolves the HJ. The cofactor is Mg(2+).

Its subcellular location is the cytoplasm. The enzyme catalyses Endonucleolytic cleavage at a junction such as a reciprocal single-stranded crossover between two homologous DNA duplexes (Holliday junction).. The RuvA-RuvB-RuvC complex processes Holliday junction (HJ) DNA during genetic recombination and DNA repair. Endonuclease that resolves HJ intermediates. Cleaves cruciform DNA by making single-stranded nicks across the HJ at symmetrical positions within the homologous arms, yielding a 5'-phosphate and a 3'-hydroxyl group; requires a central core of homology in the junction. The consensus cleavage sequence is 5'-(A/T)TT(C/G)-3'. Cleavage occurs on the 3'-side of the TT dinucleotide at the point of strand exchange. HJ branch migration catalyzed by RuvA-RuvB allows RuvC to scan DNA until it finds its consensus sequence, where it cleaves and resolves the cruciform DNA. The protein is Crossover junction endodeoxyribonuclease RuvC of Pectobacterium carotovorum subsp. carotovorum (strain PC1).